The primary structure comprises 544 residues: Chaperonin GroEL 2 (544 aa).

ATP-binding positions include 29-32 (TLGP), 86-90 (DGTTT), glycine 413, 479-481 (NAA), and aspartate 495.

It belongs to the chaperonin (HSP60) family. As to quaternary structure, forms a cylinder of 14 subunits composed of two heptameric rings stacked back-to-back. Interacts with the co-chaperonin GroES.

Its subcellular location is the cytoplasm. The catalysed reaction is ATP + H2O + a folded polypeptide = ADP + phosphate + an unfolded polypeptide.. In terms of biological role, together with its co-chaperonin GroES, plays an essential role in assisting protein folding. The GroEL-GroES system forms a nano-cage that allows encapsulation of the non-native substrate proteins and provides a physical environment optimized to promote and accelerate protein folding. The polypeptide is Chaperonin GroEL 2 (Synechococcus sp. (strain CC9605)).